Consider the following 720-residue polypeptide: Probable GTPase-activating protein GYL1 (720 aa).

M1 is modified (N-acetylmethionine). A compositionally biased stretch (basic and acidic residues) spans 1–52 (MNSNEDIHEERIEVPRTPHQTQPEKDSDRIALRDEISVPEGDEKAYSDEKVE). Residues 1-132 (MNSNEDIHEE…TSPPLPPRAD (132 aa)) form a disordered region. A Phosphothreonine modification is found at T17. The residue at position 37 (S37) is a Phosphoserine. The segment covering 54 to 66 (ATTNASSNFGSNE) has biased composition (polar residues). At S73 the chain carries Phosphoserine. Over residues 95–108 (SKTILPSDDLSQQL) the composition is skewed to polar residues. Residues 111 to 120 (EESKVEEALK) show a composition bias toward basic and acidic residues. S139 is modified (phosphoserine). 2 disordered regions span residues 144–164 (SLPP…RPQL) and 179–210 (APHG…PRRI). Over residues 184–196 (ATPSKSPTSAVGN) the composition is skewed to polar residues. In terms of domain architecture, Rab-GAP TBC spans 297–477 (GIPAAYRLVV…RIGDMVFLEG (181 aa)). K498 is covalently cross-linked (Glycyl lysine isopeptide (Lys-Gly) (interchain with G-Cter in SUMO)). The stretch at 572-696 (QYKSITEKNL…EIKTANKNGT (125 aa)) forms a coiled coil.

The protein belongs to the GYP5 family. As to quaternary structure, interacts with GYP5 and RVS167. Is part of SEC4-containing complexes.

It is found in the cytoplasm. The protein resides in the bud. Its subcellular location is the bud neck. Its function is as follows. Probable GTPase-activating protein which stimulates the GTP hydrolysis rate by GYP5 of YPT1 and SEC4. Involved in ER to Golgi trafficking and polarized exocytosis. The protein is Probable GTPase-activating protein GYL1 (GYL1) of Saccharomyces cerevisiae (strain ATCC 204508 / S288c) (Baker's yeast).